The following is a 271-amino-acid chain: Dermonecrotic toxin LhSicTox-alphaIA2bv (271 aa).

The active site involves His-3. Glu-23 and Asp-25 together coordinate Mg(2+). 2 cysteine pairs are disulfide-bonded: Cys-43–Cys-49 and Cys-45–Cys-188. Asp-83 serves as a coordination point for Mg(2+).

This sequence belongs to the arthropod phospholipase D family. Class II subfamily. It depends on Mg(2+) as a cofactor. As to expression, expressed by the venom gland.

The protein resides in the secreted. The catalysed reaction is an N-(acyl)-sphingosylphosphocholine = an N-(acyl)-sphingosyl-1,3-cyclic phosphate + choline. It carries out the reaction an N-(acyl)-sphingosylphosphoethanolamine = an N-(acyl)-sphingosyl-1,3-cyclic phosphate + ethanolamine. It catalyses the reaction a 1-acyl-sn-glycero-3-phosphocholine = a 1-acyl-sn-glycero-2,3-cyclic phosphate + choline. The enzyme catalyses a 1-acyl-sn-glycero-3-phosphoethanolamine = a 1-acyl-sn-glycero-2,3-cyclic phosphate + ethanolamine. Functionally, dermonecrotic toxins cleave the phosphodiester linkage between the phosphate and headgroup of certain phospholipids (sphingolipid and lysolipid substrates), forming an alcohol (often choline) and a cyclic phosphate. This toxin acts on sphingomyelin (SM). It may also act on ceramide phosphoethanolamine (CPE), lysophosphatidylcholine (LPC) and lysophosphatidylethanolamine (LPE), but not on lysophosphatidylserine (LPS), and lysophosphatidylglycerol (LPG). It acts by transphosphatidylation, releasing exclusively cyclic phosphate products as second products. Induces dermonecrosis, hemolysis, increased vascular permeability, edema, inflammatory response, and platelet aggregation. The chain is Dermonecrotic toxin LhSicTox-alphaIA2bv from Loxosceles hirsuta (Recluse spider).